The following is a 104-amino-acid chain: MAAKIRKGDKVIVLSGRDKGRTGEVFEVRPDAGKALVRGINVVKRHQKQTQTQEGGIISKEAPIDLSNIAIVGKDGKPTRVGFKILADGKKVRVAKRSGAEIDG.

The protein belongs to the universal ribosomal protein uL24 family. Part of the 50S ribosomal subunit. Post-translationally, a methylated and unmethylated form are thought to exist.

Functionally, one of two assembly initiator proteins, it binds directly to the 5'-end of the 23S rRNA, where it nucleates assembly of the 50S subunit. One of the proteins that surrounds the polypeptide exit tunnel on the outside of the subunit. This Rhodopseudomonas palustris (strain ATCC BAA-98 / CGA009) protein is Large ribosomal subunit protein uL24.